A 461-amino-acid polypeptide reads, in one-letter code: Argininosuccinate lyase (461 aa).

This sequence belongs to the lyase 1 family. Argininosuccinate lyase subfamily.

It localises to the cytoplasm. It carries out the reaction 2-(N(omega)-L-arginino)succinate = fumarate + L-arginine. It functions in the pathway amino-acid biosynthesis; L-arginine biosynthesis; L-arginine from L-ornithine and carbamoyl phosphate: step 3/3. This chain is Argininosuccinate lyase, found in Chlorobium chlorochromatii (strain CaD3).